The sequence spans 238 residues: Fatty acid metabolism regulator protein (238 aa).

An HTH gntR-type domain is found at 6–74; that stretch reads KGPASFAEKY…HGKPTRVNNF (69 aa). A DNA-binding region (H-T-H motif) is located at residues 34 to 53; that stretch reads ERELSELIGVTRTTLREVLQ.

In terms of assembly, homodimer.

It is found in the cytoplasm. Its function is as follows. Multifunctional regulator of fatty acid metabolism. The polypeptide is Fatty acid metabolism regulator protein (Shewanella baltica (strain OS185)).